A 96-amino-acid chain; its full sequence is Large ribosomal subunit protein bL28 (96 aa).

Polar residues predominate over residues 1 to 22; sequence MSRSCELTGKGVQSGNNVSHAN. The interval 1–24 is disordered; that stretch reads MSRSCELTGKGVQSGNNVSHANNK.

The protein belongs to the bacterial ribosomal protein bL28 family.

The sequence is that of Large ribosomal subunit protein bL28 from Rhizobium meliloti (strain 1021) (Ensifer meliloti).